Here is a 520-residue protein sequence, read N- to C-terminus: Arabinose import ATP-binding protein AraG (520 aa).

Positions methionine 1–serine 10 are enriched in polar residues. The interval methionine 1–glycine 27 is disordered. ABC transporter domains lie at leucine 30 to arginine 265 and arginine 265 to leucine 516. Glycine 62–serine 69 contacts ATP.

It belongs to the ABC transporter superfamily. Arabinose importer (TC 3.A.1.2.2) family. In terms of assembly, the complex is composed of two ATP-binding proteins (AraG), two transmembrane proteins (AraH) and a solute-binding protein (AraF).

Its subcellular location is the cell inner membrane. It carries out the reaction L-arabinose(out) + ATP + H2O = L-arabinose(in) + ADP + phosphate + H(+). Its function is as follows. Part of the ABC transporter complex AraFGH involved in L-arabinose import. Responsible for energy coupling to the transport system. This is Arabinose import ATP-binding protein AraG from Azospirillum brasilense.